The primary structure comprises 58 residues: Ribosome modulation factor (58 aa).

This sequence belongs to the ribosome modulation factor family.

The protein resides in the cytoplasm. Its function is as follows. During stationary phase, converts 70S ribosomes to an inactive dimeric form (100S ribosomes). This Tolumonas auensis (strain DSM 9187 / NBRC 110442 / TA 4) protein is Ribosome modulation factor.